The following is a 258-amino-acid chain: Proliferating cell nuclear antigen (258 aa).

The DNA-binding element occupies 61–80 (RCDHPVTLGMDLTSLSKILR). Residue Lys-127 forms a Glycyl lysine isopeptide (Lys-Gly) (interchain with G-Cter in SUMO) linkage. Lys-164 participates in a covalent cross-link: Glycyl lysine isopeptide (Lys-Gly) (interchain with G-Cter in SUMO); alternate. Lys-164 participates in a covalent cross-link: Glycyl lysine isopeptide (Lys-Gly) (interchain with G-Cter in ubiquitin); alternate.

It belongs to the PCNA family. Homotrimer. Interacts with RAD30. Interacts with MCM10. Interacts with UBP10. Sumoylated on Lys-164, and to a lesser extent on Lys-127 by the UBC9/SIZ1 complex during S-phase; which impairs ubiquitination and function in DNA repair. In terms of processing, monoubiquitinated on Lys-164 by the UBC2/RAD18 complex upon DNA damage, and then polyubiquitinated through 'Lys-63'-linkage by UBC13/MMS2. Ubiquitination is required for UBC2-mediated DNA repair. Post-translationally, lys-164 is deubiquitinated by UBP10.

Its subcellular location is the nucleus. This protein is an auxiliary protein of DNA polymerase delta and is involved in the control of eukaryotic DNA replication by increasing the polymerase's processibility during elongation of the leading strand. Involved in DNA repair. This is Proliferating cell nuclear antigen (POL30) from Saccharomyces cerevisiae (strain ATCC 204508 / S288c) (Baker's yeast).